We begin with the raw amino-acid sequence, 338 residues long: Glycerol-3-phosphate dehydrogenase [NAD(P)+] (338 aa).

NADPH-binding residues include Ser13, Trp14, and Lys108. Lys108, Gly139, and Ser141 together coordinate sn-glycerol 3-phosphate. NADPH is bound at residue Ala143. The sn-glycerol 3-phosphate site is built by Lys194, Asp247, Ser257, Arg258, and Asn259. Lys194 functions as the Proton acceptor in the catalytic mechanism. Position 258 (Arg258) interacts with NADPH. The NADPH site is built by Val282 and Glu284.

It belongs to the NAD-dependent glycerol-3-phosphate dehydrogenase family.

It is found in the cytoplasm. It catalyses the reaction sn-glycerol 3-phosphate + NAD(+) = dihydroxyacetone phosphate + NADH + H(+). The catalysed reaction is sn-glycerol 3-phosphate + NADP(+) = dihydroxyacetone phosphate + NADPH + H(+). It participates in membrane lipid metabolism; glycerophospholipid metabolism. Catalyzes the reduction of the glycolytic intermediate dihydroxyacetone phosphate (DHAP) to sn-glycerol 3-phosphate (G3P), the key precursor for phospholipid synthesis. The polypeptide is Glycerol-3-phosphate dehydrogenase [NAD(P)+] (Streptococcus pneumoniae (strain CGSP14)).